A 92-amino-acid polypeptide reads, in one-letter code: Ribonuclease P protein component 1 (92 aa).

The protein belongs to the eukaryotic/archaeal RNase P protein component 1 family. Consists of a catalytic RNA component and at least 4-5 protein subunits.

The protein localises to the cytoplasm. The catalysed reaction is Endonucleolytic cleavage of RNA, removing 5'-extranucleotides from tRNA precursor.. In terms of biological role, part of ribonuclease P, a protein complex that generates mature tRNA molecules by cleaving their 5'-ends. The polypeptide is Ribonuclease P protein component 1 (Staphylothermus marinus (strain ATCC 43588 / DSM 3639 / JCM 9404 / F1)).